Reading from the N-terminus, the 469-residue chain is UDP-N-acetylmuramate--L-alanine ligase (469 aa).

ATP is bound at residue 114–120; that stretch reads GTHGKTT.

This sequence belongs to the MurCDEF family.

It is found in the cytoplasm. The enzyme catalyses UDP-N-acetyl-alpha-D-muramate + L-alanine + ATP = UDP-N-acetyl-alpha-D-muramoyl-L-alanine + ADP + phosphate + H(+). The protein operates within cell wall biogenesis; peptidoglycan biosynthesis. Its function is as follows. Cell wall formation. The chain is UDP-N-acetylmuramate--L-alanine ligase from Chlorobium phaeovibrioides (strain DSM 265 / 1930) (Prosthecochloris vibrioformis (strain DSM 265)).